The primary structure comprises 694 residues: MTDTVFSNSSNRWMYPSDRPLQSNDKEQLQAGWSVHPGGQPDRQRKQEELTDEEKEIINRVIARAEKMEEMEQERIGRLVDRLENMRKNVAGDGVNRCILCGEQLGMLGSACVVCEDCKKNVCTKCGVETNNRLHSVWLCKICIEQREVWKRSGAWFFKGFPKQVLPQPMPIKKTKPQQPVSEPAAPEQPAPEPKHPARAPARGDSEDRRGPGQKTGPDPASAPGRGNYGPPVRRASEARMSSSSRDSESWDHSGGAGDSSRSPAGLRRANSVQASRPAPGSVQSPAPPQPGQPGTPGGSRPGPGPAGRFPDQKPEVAPSDPGTTAPPREERTGGVGGYPAVGAREDRMSHPSGPYSQASAAAPQPAAARQPPPPEEEEEEANSYDSDEATTLGALEFSLLYDQDNSSLQCTIIKAKGLKPMDSNGLADPYVKLHLLPGASKSNKLRTKTLRNTRNPIWNETLVYHGITDEDMQRKTLRISVCDEDKFGHNEFIGETRFSLKKLKPNQRKNFNICLERVIPMKRAGTTGSARGMALYEEEQVERVGDIEERGKILVSLMYSTQQGGLIVGIIRCVHLAAMDANGYSDPFVKLWLKPDMGKKAKHKTQIKKKTLNPEFNEEFFYDIKHSDLAKKSLDISVWDYDIGKSNDYIGGCQLGISAKGERLKHWYECLKNKDKKIERWHQLQNENHVSSD.

A compositionally biased stretch (polar residues) spans 1–12; it reads MTDTVFSNSSNR. The tract at residues 1 to 51 is disordered; that stretch reads MTDTVFSNSSNRWMYPSDRPLQSNDKEQLQAGWSVHPGGQPDRQRKQEELT. The RabBD domain occupies 44-160; sequence QRKQEELTDE…KRSGAWFFKG (117 aa). An FYVE-type zinc finger spans residues 92-148; that stretch reads GDGVNRCILCGEQLGMLGSACVVCEDCKKNVCTKCGVETNNRLHSVWLCKICIEQRE. Zn(2+) is bound by residues cysteine 98, cysteine 101, cysteine 115, cysteine 118, cysteine 123, cysteine 126, cysteine 140, and cysteine 143. Residues 166–388 form a disordered region; it reads LPQPMPIKKT…EEEANSYDSD (223 aa). The segment covering 177 to 186 has biased composition (low complexity); that stretch reads PQQPVSEPAA. The segment covering 202–211 has biased composition (basic and acidic residues); the sequence is ARGDSEDRRG. Arginine 226 carries the post-translational modification Omega-N-methylarginine. The residue at position 272 (serine 272) is a Phosphoserine. The segment covering 352 to 370 has biased composition (low complexity); it reads PSGPYSQASAAAPQPAAAR. The span at 375–388 shows a compositional bias: acidic residues; the sequence is PEEEEEEANSYDSD. One can recognise a C2 1 domain in the interval 392-514; that stretch reads TLGALEFSLL…KPNQRKNFNI (123 aa). Residues methionine 422, aspartate 423, aspartate 429, aspartate 484, glutamate 485, aspartate 486, glutamate 492, glutamate 539, aspartate 581, aspartate 587, aspartate 641, tyrosine 642, aspartate 643, and aspartate 649 each coordinate Ca(2+). Positions 550 to 683 constitute a C2 2 domain; that stretch reads ERGKILVSLM…NKDKKIERWH (134 aa). Phosphoserine is present on residues serine 692 and serine 693.

As to quaternary structure, interacts with RAB3B, RAB3C, RAB3D, RAB8A, RAB27A and RAB27B. Interacts with RAB3A; this interaction recruits RPH3A to synaptic vesicules. Interacts (via C2B domain) with SNAP25. Interacts with deubiquitinating enzyme CAND1; this interaction results in the deubiquitination of RPH3A. Interacts with GRIN2A and DLG4; this ternary complex regulates NMDA receptor composition at postsynaptic membranes. Interacts with SNCA. Requires Ca(2+) as cofactor. In terms of processing, ubiquitinated. Deubiquitinated by CAND1 to prevent its degradation.

The protein resides in the cytoplasmic vesicle. It localises to the secretory vesicle. Its subcellular location is the synaptic vesicle membrane. The protein localises to the cell projection. It is found in the dendritic spine. The protein resides in the postsynaptic cell membrane. It localises to the membrane. Its function is as follows. Plays an essential role in docking and fusion steps of regulated exocytosis. At the presynaptic level, RPH3A is recruited by RAB3A to the synaptic vesicle membrane in a GTP-dependent manner where it modulates synaptic vesicle trafficking and calcium-triggered neurotransmitter release. In the post-synaptic compartment, forms a ternary complex with GRIN2A and DLG4 and regulates NMDA receptor stability. Also plays a role in the exocytosis of arginine vasopressin hormone. This Homo sapiens (Human) protein is Rabphilin-3A (RPH3A).